The chain runs to 190 residues: Adenine phosphoribosyltransferase (190 aa).

It belongs to the purine/pyrimidine phosphoribosyltransferase family. In terms of assembly, homodimer.

The protein localises to the cytoplasm. It catalyses the reaction AMP + diphosphate = 5-phospho-alpha-D-ribose 1-diphosphate + adenine. Its pathway is purine metabolism; AMP biosynthesis via salvage pathway; AMP from adenine: step 1/1. Catalyzes a salvage reaction resulting in the formation of AMP, that is energically less costly than de novo synthesis. This chain is Adenine phosphoribosyltransferase, found in Cupriavidus taiwanensis (strain DSM 17343 / BCRC 17206 / CCUG 44338 / CIP 107171 / LMG 19424 / R1) (Ralstonia taiwanensis (strain LMG 19424)).